The primary structure comprises 198 residues: ATP-dependent Clp protease proteolytic subunit 1 (198 aa).

Catalysis depends on serine 96, which acts as the Nucleophile. Histidine 121 is a catalytic residue.

The protein belongs to the peptidase S14 family. In terms of assembly, fourteen ClpP subunits assemble into 2 heptameric rings which stack back to back to give a disk-like structure with a central cavity, resembling the structure of eukaryotic proteasomes.

It localises to the cytoplasm. The enzyme catalyses Hydrolysis of proteins to small peptides in the presence of ATP and magnesium. alpha-casein is the usual test substrate. In the absence of ATP, only oligopeptides shorter than five residues are hydrolyzed (such as succinyl-Leu-Tyr-|-NHMec, and Leu-Tyr-Leu-|-Tyr-Trp, in which cleavage of the -Tyr-|-Leu- and -Tyr-|-Trp bonds also occurs).. Cleaves peptides in various proteins in a process that requires ATP hydrolysis. Has a chymotrypsin-like activity. Plays a major role in the degradation of misfolded proteins. This is ATP-dependent Clp protease proteolytic subunit 1 from Synechocystis sp. (strain ATCC 27184 / PCC 6803 / Kazusa).